Consider the following 451-residue polypeptide: NADP-specific glutamate dehydrogenase (451 aa).

The active site involves Lys-114.

It belongs to the Glu/Leu/Phe/Val dehydrogenases family. In terms of assembly, homohexamer.

It catalyses the reaction L-glutamate + NADP(+) + H2O = 2-oxoglutarate + NH4(+) + NADPH + H(+). This chain is NADP-specific glutamate dehydrogenase (GDH2), found in Fusarium fujikuroi (Bakanae and foot rot disease fungus).